Consider the following 306-residue polypeptide: Palmitoyl-protein thioesterase ABHD10, mitochondrial (306 aa).

Residues 1–52 (MAGVGLAAVPAWVPCRRWGLAAVTFGFHHGLSTLLARKTERAPQWLRACRHK) constitute a mitochondrion transit peptide. The AB hydrolase-1 domain maps to 78–177 (IIFIPGYISN…KVVALVGVAT (100 aa)). Residues serine 152, aspartate 249, and histidine 279 each act as charge relay system in the active site.

It belongs to the AB hydrolase superfamily.

The protein resides in the mitochondrion. It carries out the reaction S-hexadecanoyl-L-cysteinyl-[protein] + H2O = L-cysteinyl-[protein] + hexadecanoate + H(+). The enzyme catalyses mycophenolic acid O-acyl-beta-D-glucuronide + H2O = mycophenolate + D-glucuronate + H(+). Inhibited by palmostatin-B. Acts as an acyl-protein thioesterase that hydrolyzes fatty acids from acylated residues in proteins. Regulates the mitochondrial S-depalmitoylation of the nucleophilic active site residue of peroxiredoxin-5/PRDX5, a key antioxidant protein, therefore modulating mitochondrial antioxidant ability. Also catalyzes the deglucuronidation of mycophenolic acid acyl-glucuronide, an active metabolite of the immunosuppressant drug mycophenolate. The sequence is that of Palmitoyl-protein thioesterase ABHD10, mitochondrial (ABHD10) from Bos taurus (Bovine).